A 232-amino-acid polypeptide reads, in one-letter code: Sugar fermentation stimulation protein homolog (232 aa).

This sequence belongs to the SfsA family.

The chain is Sugar fermentation stimulation protein homolog from Magnetococcus marinus (strain ATCC BAA-1437 / JCM 17883 / MC-1).